The sequence spans 782 residues: Endonuclease MutS2 (782 aa).

336 to 343 serves as a coordination point for ATP; sequence GPNTGGKT. A Smr domain is found at 707-782; it reads LDLRGYRYED…GFGVTVATLK (76 aa).

This sequence belongs to the DNA mismatch repair MutS family. MutS2 subfamily. In terms of assembly, homodimer. Binds to stalled ribosomes, contacting rRNA.

Endonuclease that is involved in the suppression of homologous recombination and thus may have a key role in the control of bacterial genetic diversity. In terms of biological role, acts as a ribosome collision sensor, splitting the ribosome into its 2 subunits. Detects stalled/collided 70S ribosomes which it binds and splits by an ATP-hydrolysis driven conformational change. Acts upstream of the ribosome quality control system (RQC), a ribosome-associated complex that mediates the extraction of incompletely synthesized nascent chains from stalled ribosomes and their subsequent degradation. Probably generates substrates for RQC. The sequence is that of Endonuclease MutS2 from Staphylococcus aureus (strain MRSA252).